Here is a 138-residue protein sequence, read N- to C-terminus: Putative esterase HI_1161 (138 aa).

It belongs to the thioesterase PaaI family.

The sequence is that of Putative esterase HI_1161 from Haemophilus influenzae (strain ATCC 51907 / DSM 11121 / KW20 / Rd).